The chain runs to 218 residues: Ribose-5-phosphate isomerase A (218 aa).

Substrate is bound by residues Lys-7, 28–31 (TGST), 81–84 (DGAD), and 94–97 (KGGG). Glu-103 serves as the catalytic Proton acceptor. Residue Lys-121 participates in substrate binding.

This sequence belongs to the ribose 5-phosphate isomerase family. In terms of assembly, homodimer.

The catalysed reaction is aldehydo-D-ribose 5-phosphate = D-ribulose 5-phosphate. The protein operates within carbohydrate degradation; pentose phosphate pathway; D-ribose 5-phosphate from D-ribulose 5-phosphate (non-oxidative stage): step 1/1. In terms of biological role, catalyzes the reversible conversion of ribose-5-phosphate to ribulose 5-phosphate. The protein is Ribose-5-phosphate isomerase A of Vibrio vulnificus (strain YJ016).